Here is a 272-residue protein sequence, read N- to C-terminus: ATP synthase subunit a (272 aa).

5 helical membrane passes run 41–61 (TLNIDSMFFSVVLGLLFLVLF), 101–121 (LIAPLALTIFVWVFLMNLMDL), 147–167 (DVNITLSMALGVFILILFYSI), 212–232 (LFGNMYAGELIFILIAGLLPW), and 243–263 (AIFHILIITLQAFIFMVLTIV).

The protein belongs to the ATPase A chain family. F-type ATPases have 2 components, CF(1) - the catalytic core - and CF(0) - the membrane proton channel. CF(1) has five subunits: alpha(3), beta(3), gamma(1), delta(1), epsilon(1). CF(0) has three main subunits: a(1), b(2) and c(9-12). The alpha and beta chains form an alternating ring which encloses part of the gamma chain. CF(1) is attached to CF(0) by a central stalk formed by the gamma and epsilon chains, while a peripheral stalk is formed by the delta and b chains.

The protein resides in the cell inner membrane. Key component of the proton channel; it plays a direct role in the translocation of protons across the membrane. The sequence is that of ATP synthase subunit a from Cronobacter sakazakii (strain ATCC BAA-894) (Enterobacter sakazakii).